We begin with the raw amino-acid sequence, 726 residues long: Catalase-peroxidase (726 aa).

Residues Met-1–Ser-33 form a disordered region. The tryptophyl-tyrosyl-methioninium (Trp-Tyr) (with M-252) cross-link spans Trp-105–Tyr-226. The active-site Proton acceptor is the His-106. A cross-link (tryptophyl-tyrosyl-methioninium (Tyr-Met) (with W-105)) is located at residues Tyr-226–Met-252. His-267 lines the heme b pocket.

It belongs to the peroxidase family. Peroxidase/catalase subfamily. As to quaternary structure, homodimer or homotetramer. Heme b serves as cofactor. Formation of the three residue Trp-Tyr-Met cross-link is important for the catalase, but not the peroxidase activity of the enzyme.

It catalyses the reaction H2O2 + AH2 = A + 2 H2O. The catalysed reaction is 2 H2O2 = O2 + 2 H2O. Functionally, bifunctional enzyme with both catalase and broad-spectrum peroxidase activity. The polypeptide is Catalase-peroxidase (Salmonella arizonae (strain ATCC BAA-731 / CDC346-86 / RSK2980)).